Consider the following 100-residue polypeptide: Large ribosomal subunit protein uL23 (100 aa).

Belongs to the universal ribosomal protein uL23 family. As to quaternary structure, part of the 50S ribosomal subunit. Contacts protein L29, and trigger factor when it is bound to the ribosome.

One of the early assembly proteins it binds 23S rRNA. One of the proteins that surrounds the polypeptide exit tunnel on the outside of the ribosome. Forms the main docking site for trigger factor binding to the ribosome. The polypeptide is Large ribosomal subunit protein uL23 (Prochlorococcus marinus (strain AS9601)).